A 521-amino-acid polypeptide reads, in one-letter code: MSELAAVLTRSMQASAGDLMVLDRETSLWCRHPWPEVHGLAESVCGWLLDHDRPAAVGLVGEPTVELVAAIQGAWLAGAAVSILPGPVRGANDQRWADATLTRFLGIGVRTVLSQGSYLARLRSVDTAGVTIGDLSTAAHTNRSATPVASEGPAVLQGTAGSTGAPRTAILSPGAVLSNLRGLNQRVGTDAATDVGCSWLPLYHDMGLAFVLSAALAGAPLWLAPTTAFTASPFRWLSWLSDSGATMTAAPNFAYNLIGKYARRVSEVDLGALRVTLNGGEPVDCDGLTRFAEAMAPFGFDAGAVLPSYGLAESTCAVTVPVPGIGLLADRVIDGSGAHKHAVLGNPIPGMEVRISCGDQAAGNASREIGEIEIRGASMMAGYLGQQPIDPDDWFATGDLGYLGAGGLVVCGRAKEVISIAGRNIFPTEVELVAAQVRGVREGAVVALGTGDRSTRPGLVVAAEFRGPDEANARAELIQRVASECGIVPSDVVFVSPGSLPRTSSGKLRRLAVRRSLEMAD.

The protein belongs to the ATP-dependent AMP-binding enzyme family.

The enzyme catalyses a long-chain fatty acid + holo-[ACP] + ATP = a long-chain fatty acyl-[ACP] + AMP + diphosphate. It carries out the reaction a medium-chain fatty acid + holo-[ACP] + ATP = a medium-chain fatty acyl-[ACP] + AMP + diphosphate. Its pathway is siderophore biosynthesis; mycobactin biosynthesis. Its function is as follows. Activates lipidic moieties required for mycobactin biosynthesis. Converts medium- to long-chain aliphatic fatty acids into acyl adenylate, which is further transferred on to the phosphopantetheine arm of the carrier protein MbtL. The protein is Medium/long-chain-fatty-acid--[acyl-carrier-protein] ligase MbtM (mbtM) of Mycobacterium tuberculosis (strain CDC 1551 / Oshkosh).